Here is a 102-residue protein sequence, read N- to C-terminus: Small ribosomal subunit protein eS24 (102 aa).

Positions 70–102 (VYDSPAQAAEVEHDHMLERNKIGADDADAEEAE) are disordered. Basic and acidic residues predominate over residues 79-93 (EVEHDHMLERNKIGA).

This sequence belongs to the eukaryotic ribosomal protein eS24 family.

This is Small ribosomal subunit protein eS24 from Halobacterium salinarum (strain ATCC 29341 / DSM 671 / R1).